Reading from the N-terminus, the 338-residue chain is Flap endonuclease 1 (338 aa).

Residues 1–98 form an N-domain region; sequence MGTDIGDLLL…DTLAKRHEVR (98 aa). Residues Asp27, Asp80, Glu152, Glu154, Asp173, Asp175, and Asp236 each coordinate Mg(2+). An I-domain region spans residues 116 to 257; sequence EAYKYAQASS…RALKLVKEHG (142 aa). Positions 330 to 338 are interaction with PCNA; sequence SQSTLDQWF.

The protein belongs to the XPG/RAD2 endonuclease family. FEN1 subfamily. In terms of assembly, interacts with PCNA. PCNA stimulates the nuclease activity without altering cleavage specificity. Mg(2+) serves as cofactor.

In terms of biological role, structure-specific nuclease with 5'-flap endonuclease and 5'-3' exonuclease activities involved in DNA replication and repair. During DNA replication, cleaves the 5'-overhanging flap structure that is generated by displacement synthesis when DNA polymerase encounters the 5'-end of a downstream Okazaki fragment. Binds the unpaired 3'-DNA end and kinks the DNA to facilitate 5' cleavage specificity. Cleaves one nucleotide into the double-stranded DNA from the junction in flap DNA, leaving a nick for ligation. Also involved in the base excision repair (BER) pathway. Acts as a genome stabilization factor that prevents flaps from equilibrating into structures that lead to duplications and deletions. Also possesses 5'-3' exonuclease activity on nicked or gapped double-stranded DNA. This chain is Flap endonuclease 1, found in Methanococcoides burtonii (strain DSM 6242 / NBRC 107633 / OCM 468 / ACE-M).